Reading from the N-terminus, the 339-residue chain is Tetraacyldisaccharide 4'-kinase (339 aa).

Asn58–Thr65 is a binding site for ATP.

It belongs to the LpxK family.

It carries out the reaction a lipid A disaccharide + ATP = a lipid IVA + ADP + H(+). Its pathway is glycolipid biosynthesis; lipid IV(A) biosynthesis; lipid IV(A) from (3R)-3-hydroxytetradecanoyl-[acyl-carrier-protein] and UDP-N-acetyl-alpha-D-glucosamine: step 6/6. Functionally, transfers the gamma-phosphate of ATP to the 4'-position of a tetraacyldisaccharide 1-phosphate intermediate (termed DS-1-P) to form tetraacyldisaccharide 1,4'-bis-phosphate (lipid IVA). This chain is Tetraacyldisaccharide 4'-kinase, found in Chromobacterium violaceum (strain ATCC 12472 / DSM 30191 / JCM 1249 / CCUG 213 / NBRC 12614 / NCIMB 9131 / NCTC 9757 / MK).